The chain runs to 151 residues: MSSFSTTTVSFLLLLAFQLLGQTRANPMYNAVSNADLMDFKNLLDHLEEKMPLEDEVVPPQVLSEPNEEAGAALSPLPEVPPWTGEVSPAQRDGGALGRGPWDSSDRSALLKSKLRALLTAPRSLRRSSCFGGRMDRIGAQSGLGCNSFRY.

An N-terminal signal peptide occupies residues 1–25 (MSSFSTTTVSFLLLLAFQLLGQTRA). A disordered region spans residues 62–105 (VLSEPNEEAGAALSPLPEVPPWTGEVSPAQRDGGALGRGPWDSS). A propeptide spanning residues 93–103 (DGGALGRGPWD) is cleaved from the precursor. Ser129 carries the phosphoserine modification. A disulfide bond links Cys130 and Cys146. An important for degradation of atrial natriuretic peptide by IDE region spans residues 147 to 151 (NSFRY).

Belongs to the natriuretic peptide family. As to quaternary structure, homodimer; disulfide-linked antiparallel dimer. The precursor molecule is proteolytically cleaved by CORIN at Arg-123 to produce atrial natriuretic peptide. Undergoes further proteolytic cleavage by unknown proteases to give rise to long-acting natriuretic peptide, vessel dilator and kaliuretic peptide. Additional processing gives rise to the auriculin and atriopeptin peptides. In the kidneys, alternative processing by an unknown protease results in the peptide urodilatin. In terms of processing, cleavage by MME initiates degradation of the factor and thereby regulates its activity. Degraded by IDE (in vitro). During IDE degradation, the resulting products can temporarily stimulate NPR2 to produce cGMP, before the fragments are completely degraded and inactivated by IDE (in vitro). Post-translationally, degraded by IDE. Phosphorylation on Ser-129 decreases vasorelaxant activity. Detected in the kidney distal tubular cells (at protein level). Present in urine (at protein level). In terms of tissue distribution, detected in atrial and ventricular plasma samples, and in adipocytes (at protein level). Detected in urine in one study. However, was not detected in urine in another study. In the brain, predominantly expressed in the gray matter with very weak expression in the white matter (at protein level). Localizes to astrocyte-like structures throughout the white matter, and in the cerebral vessels detected in the leptomeningeal and parenchymal vessels, and endothelium and smooth muscle layers (at protein level). Relatively low levels of expression in the kidneys compared to urodilatin (at protein level).

It is found in the secreted. Its subcellular location is the perikaryon. It localises to the cell projection. Functionally, hormone that plays a key role in mediating cardio-renal homeostasis, and is involved in vascular remodeling and regulating energy metabolism. Acts by specifically binding and stimulating NPR1 to produce cGMP, which in turn activates effector proteins, such as PRKG1, that drive various biological responses. Regulates vasodilation, natriuresis, diuresis and aldosterone synthesis and is therefore essential for regulating blood pressure, controlling the extracellular fluid volume and maintaining the fluid-electrolyte balance. Also involved in inhibiting cardiac remodeling and cardiac hypertrophy by inducing cardiomyocyte apoptosis and attenuating the growth of cardiomyocytes and fibroblasts. Plays a role in female pregnancy by promoting trophoblast invasion and spiral artery remodeling in uterus, and thus prevents pregnancy-induced hypertension. In adipose tissue, acts in various cGMP- and PKG-dependent pathways to regulate lipid metabolism and energy homeostasis. This includes up-regulating lipid metabolism and mitochondrial oxygen utilization by activating the AMP-activated protein kinase (AMPK), and increasing energy expenditure by acting via MAPK11 to promote the UCP1-dependent thermogenesis of brown adipose tissue. Binds the clearance receptor NPR3 which removes the hormone from circulation. In terms of biological role, may have a role in cardio-renal homeostasis through regulation of natriuresis, diuresis, vasodilation, and inhibiting aldosterone synthesis. In vitro, promotes the production of cGMP and induces vasodilation. May promote natriuresis, at least in part, by enhancing prostaglandin E2 synthesis resulting in the inhibition of renal Na+-K+-ATPase. However reports on the involvement of this peptide in mammal blood volume and blood pressure homeostasis are conflicting; according to a report, in vivo it is not sufficient to activate cGMP and does not inhibit collecting duct transport nor effect diuresis and natriuresis. Appears to bind to specific receptors that are distinct from the receptors bound by atrial natriuretic peptide and vessel dilator. Possibly enhances protein excretion in urine by decreasing proximal tubular protein reabsorption. Its function is as follows. May have a role in cardio-renal homeostasis through regulation of natriuresis, diuresis, and vasodilation. In vitro, promotes the production of cGMP and induces vasodilation. May promote natriuresis, at least in part, by enhancing prostaglandin E2 synthesis resulting in the inhibition of renal Na+-K+-ATPase. However reports on the involvement of this peptide in mammal blood volume and blood pressure homeostasis are conflicting; according to a report it is not sufficient to activate cGMP and does not inhibit collecting duct transport nor effect diuresis and natriuresis. Appears to bind to specific receptors that are distinct from the receptors bound by the atrial natriuretic and long-acting natriuretic peptides. Possibly functions in protein excretion in urine by maintaining the integrity of the proximal tubules and enhancing protein excretion by decreasing proximal tubular protein reabsorption. May have a role in cardio-renal homeostasis through regulation of diuresis and inhibiting aldosterone synthesis. In vitro, promotes the production of cGMP and induces vasodilation. May promote natriuresis, at least in part, by enhancing prostaglandin E2 synthesis resulting in the inhibition of renal Na+-K+-ATPase. May have a role in potassium excretion but not sodium excretion (natriuresis). Possibly enhances protein excretion in urine by decreasing proximal tubular protein reabsorption. Functionally, hormone produced in the kidneys that appears to be important for maintaining cardio-renal homeostasis. Mediates vasodilation, natriuresis and diuresis primarily in the renal system, in order to maintain the extracellular fluid volume and control the fluid-electrolyte balance. Specifically binds and stimulates cGMP production by renal transmembrane receptors, likely NPR1. Urodilatin not ANP, may be the natriuretic peptide responsible for the regulation of sodium and water homeostasis in the kidney. In terms of biological role, may have a role in cardio-renal homeostasis through regulation of natriuresis and vasodilation. In vivo promotes natriuresis and in vitro, vasodilates renal artery strips. Its function is as follows. May have a role in cardio-renal homeostasis through regulation of regulation of natriuresis and vasodilation. In vivo promotes natriuresis. In vitro, vasodilates intestinal smooth muscle but not smooth muscle strips. May have a role in cardio-renal homeostasis through regulation of natriuresis and vasodilation. In vivo promotes natriuresis. In vitro, selectively vasodilates intestinal and vascular smooth muscle strips. Functionally, may have a role in cardio-renal homeostasis through regulation of natriuresis and vasodilation. In vivo promotes natriuresis. In vitro, selectively vasodilates intestinal smooth muscle but not vascular smooth muscle strips. In Homo sapiens (Human), this protein is Natriuretic peptides A (NPPA).